A 317-amino-acid chain; its full sequence is MNKFTKTDVTPEKLFIQRRKIIQGMSVLSAAAAFPNLAAAKKTEEKRTALSFKADNKPDLILTPENKVIGYNNYYEFGVDKASPAKFASTLKTEPWTIEVSGEVENPMIFTLAQLLAFPLEERIYRLRCVEAWSMIVPWIGFELSRLLEKAKPTGKAKYVAFETLYDPANMPGQKNTLFGGGLDYPYKEGLTLAEAMNPLTILSVGLYGKTLTPQNGAPIRLVVPWKYGFKSIKSIVKIRLTERQPVTTWNQLTPHEYGFYANVNPEVDHPRWSQASERIIGSGGLFTVKRQPTLPFNGYEKEVAHLYKGLDLKVNF.

A signal peptide (tat-type signal) is located at residues 1–40 (MNKFTKTDVTPEKLFIQRRKIIQGMSVLSAAAAFPNLAAA). Mo-molybdopterin-binding positions include Asn-72, 75-76 (YE), Cys-129, Thr-164, Asn-216, Arg-221, and 232-234 (SIK).

The protein belongs to the MsrP family. As to quaternary structure, heterodimer of a catalytic subunit (MsrP) and a heme-binding subunit (MsrQ). It depends on Mo-molybdopterin as a cofactor. Post-translationally, predicted to be exported by the Tat system. The position of the signal peptide cleavage has not been experimentally proven.

The protein localises to the periplasm. It carries out the reaction L-methionyl-[protein] + a quinone + H2O = L-methionyl-(S)-S-oxide-[protein] + a quinol. The catalysed reaction is L-methionyl-[protein] + a quinone + H2O = L-methionyl-(R)-S-oxide-[protein] + a quinol. In terms of biological role, part of the MsrPQ system that repairs oxidized periplasmic proteins containing methionine sulfoxide residues (Met-O), using respiratory chain electrons. Thus protects these proteins from oxidative-stress damage caused by reactive species of oxygen and chlorine generated by the host defense mechanisms. MsrPQ is essential for the maintenance of envelope integrity under bleach stress, rescuing a wide series of structurally unrelated periplasmic proteins from methionine oxidation. The catalytic subunit MsrP is non-stereospecific, being able to reduce both (R-) and (S-) diastereoisomers of methionine sulfoxide. The chain is Protein-methionine-sulfoxide reductase catalytic subunit MsrP from Actinobacillus succinogenes (strain ATCC 55618 / DSM 22257 / CCUG 43843 / 130Z).